We begin with the raw amino-acid sequence, 153 residues long: DNA gyrase inhibitor (153 aa).

This sequence belongs to the DNA gyrase inhibitor family. Interacts with DNA gyrase.

The protein resides in the cytoplasm. Functionally, inhibits the supercoiling activity of DNA gyrase. Acts by inhibiting DNA gyrase at an early step, prior to (or at the step of) binding of DNA by the gyrase. It protects cells against toxins that target DNA gyrase, by inhibiting activity of these toxins and reducing the formation of lethal double-strand breaks in the cell. This is DNA gyrase inhibitor from Pantoea sp. (strain At-9b).